A 427-amino-acid chain; its full sequence is Enolase (427 aa).

Gln-163 serves as a coordination point for (2R)-2-phosphoglycerate. Glu-205 serves as the catalytic Proton donor. Mg(2+)-binding residues include Asp-242, Glu-283, and Asp-310. The (2R)-2-phosphoglycerate site is built by Lys-335, Arg-364, Ser-365, and Lys-386. Lys-335 acts as the Proton acceptor in catalysis.

The protein belongs to the enolase family. The cofactor is Mg(2+).

It localises to the cytoplasm. The protein resides in the secreted. The protein localises to the cell surface. The catalysed reaction is (2R)-2-phosphoglycerate = phosphoenolpyruvate + H2O. The protein operates within carbohydrate degradation; glycolysis; pyruvate from D-glyceraldehyde 3-phosphate: step 4/5. Catalyzes the reversible conversion of 2-phosphoglycerate (2-PG) into phosphoenolpyruvate (PEP). It is essential for the degradation of carbohydrates via glycolysis. The protein is Enolase of Salinispora tropica (strain ATCC BAA-916 / DSM 44818 / JCM 13857 / NBRC 105044 / CNB-440).